The primary structure comprises 858 residues: Ubiquitin carboxyl-terminal hydrolase 5 (858 aa).

An N-acetylalanine modification is found at Ala2. The disordered stretch occupies residues 74 to 96; it reads RRTRRPKEEDPTTGTGDPPRKKP. A Glycyl lysine isopeptide (Lys-Gly) (interchain with G-Cter in SUMO) cross-link involves residue Lys113. 2 positions are modified to phosphoserine: Ser149 and Ser156. A UBP-type; degenerate zinc finger spans residues 175–283; it reads QVSKHAFSLK…EHLSHFGIDM (109 aa). A disulfide bond links Cys195 and Cys816. Residues Cys199 and Cys202 each contribute to the Zn(2+) site. Trp209 is a substrate binding site. Cys219 serves as a coordination point for Zn(2+). 221–224 serves as a coordination point for substrate; it reads RRYF. His232 is a binding site for Zn(2+). Residues Tyr259, Tyr261, and Asp264 each contribute to the substrate site. Position 292 is a phosphothreonine (Thr292). In terms of domain architecture, USP spans 326 to 856; that stretch reads TGIRNLGNSC…LGYIYFYQRV (531 aa). Cys335 (nucleophile) is an active-site residue. Thr623 is subject to Phosphothreonine. 2 UBA domains span residues 654–695 and 722–762; these read MLDE…VMSH and PPPE…IFSH. Phosphoserine occurs at positions 779, 783, and 785. Residue His818 is the Proton acceptor of the active site.

The protein belongs to the peptidase C19 family. Homodimer. Interacts with TRIML1. Ubiquitinated by SMURF1; leading to proteasomal degradation. In terms of processing, SUMOylated at Lys-113; SUMOylation affects the interaction with Cav3.2 channels.

It localises to the cytoplasm. It is found in the stress granule. The protein resides in the nucleus. It carries out the reaction Thiol-dependent hydrolysis of ester, thioester, amide, peptide and isopeptide bonds formed by the C-terminal Gly of ubiquitin (a 76-residue protein attached to proteins as an intracellular targeting signal).. Its function is as follows. Deubiquitinating enzyme that participates in a wide range of cellular processes by specifically cleaving isopeptide bonds between ubiquitin and substrate proteins or ubiquitin itself. Affects thereby important cellular signaling pathways such as NF-kappa-B, Wnt/beta-catenin, and cytokine production by regulating ubiquitin-dependent protein degradation. Participates in the activation of the Wnt signaling pathway by promoting FOXM1 deubiquitination and stabilization that induces the recruitment of beta-catenin to Wnt target gene promoter. Regulates the assembly and disassembly of heat-induced stress granules by mediating the hydrolysis of unanchored ubiquitin chains. Promotes lipopolysaccharide-induced apoptosis and inflammatory response by stabilizing the TXNIP protein. Affects T-cell biology by stabilizing the inhibitory receptor on T-cells PDC1. Acts as a negative regulator of autophagy by regulating ULK1 at both protein and mRNA levels. Acts also as a negative regulator of type I interferon production by simultaneously removing both 'Lys-48'-linked unanchored and 'Lys-63'-linked anchored polyubiquitin chains on the transcription factor IRF3. Modulates the stability of DNA mismatch repair protein MLH1 and counteracts the effect of the ubiquitin ligase UBR4. Upon activation by insulin, it gets phosphorylated through mTORC1-mediated phosphorylation to enhance YTHDF1 stability by removing 'Lys-11'-linked polyubiquitination. May also deubiquitinate other substrates such as the calcium channel CACNA1H. This chain is Ubiquitin carboxyl-terminal hydrolase 5 (UBP5), found in Pongo abelii (Sumatran orangutan).